The following is a 2300-amino-acid chain: Protein Ycf2 (2300 aa).

Residue 1642–1649 (GSIGTGRS) participates in ATP binding.

Belongs to the Ycf2 family.

The protein localises to the plastid. It localises to the chloroplast stroma. Functionally, probable ATPase of unknown function. Its presence in a non-photosynthetic plant (Epifagus virginiana) and experiments in tobacco indicate that it has an essential function which is probably not related to photosynthesis. In Vitis vinifera (Grape), this protein is Protein Ycf2.